Here is a 396-residue protein sequence, read N- to C-terminus: Elongation factor Tu (396 aa).

Positions 10-206 constitute a tr-type G domain; sequence KPHVNVGTIG…ALDSYIPTPK (197 aa). The G1 stretch occupies residues 19–26; that stretch reads GHVDHGKT. Position 19 to 26 (19 to 26) interacts with GTP; that stretch reads GHVDHGKT. A Mg(2+)-binding site is contributed by Thr-26. The tract at residues 60-64 is G2; it reads GITIS. Positions 81-84 are G3; sequence DCPG. GTP-binding positions include 81–85 and 136–139; these read DCPGH and NKAD. The interval 136 to 139 is G4; sequence NKAD. A G5 region spans residues 174–176; it reads SAL.

The protein belongs to the TRAFAC class translation factor GTPase superfamily. Classic translation factor GTPase family. EF-Tu/EF-1A subfamily. As to quaternary structure, monomer.

The protein resides in the cytoplasm. It catalyses the reaction GTP + H2O = GDP + phosphate + H(+). GTP hydrolase that promotes the GTP-dependent binding of aminoacyl-tRNA to the A-site of ribosomes during protein biosynthesis. This is Elongation factor Tu from Vesicomyosocius okutanii subsp. Calyptogena okutanii (strain HA).